The following is a 257-amino-acid chain: Acetylglutamate kinase (257 aa).

Substrate is bound by residues 43–44, arginine 65, and asparagine 157; that span reads GG.

The protein belongs to the acetylglutamate kinase family. ArgB subfamily.

The protein localises to the cytoplasm. The catalysed reaction is N-acetyl-L-glutamate + ATP = N-acetyl-L-glutamyl 5-phosphate + ADP. It functions in the pathway amino-acid biosynthesis; L-arginine biosynthesis; N(2)-acetyl-L-ornithine from L-glutamate: step 2/4. Its function is as follows. Catalyzes the ATP-dependent phosphorylation of N-acetyl-L-glutamate. The protein is Acetylglutamate kinase of Mannheimia succiniciproducens (strain KCTC 0769BP / MBEL55E).